A 79-amino-acid chain; its full sequence is Small ribosomal subunit protein bS18B (79 aa).

A compositionally biased stretch (basic and acidic residues) spans 1 to 11; it reads MPRPRKADRTP. A disordered region spans residues 1 to 24; sequence MPRPRKADRTPARQRPNPLDRDGV.

It belongs to the bacterial ribosomal protein bS18 family. Part of the 30S ribosomal subunit. Forms a tight heterodimer with protein bS6.

Binds as a heterodimer with protein bS6 to the central domain of the 16S rRNA, where it helps stabilize the platform of the 30S subunit. In Streptomyces coelicolor (strain ATCC BAA-471 / A3(2) / M145), this protein is Small ribosomal subunit protein bS18B.